The primary structure comprises 84 residues: Large ribosomal subunit protein bL31B (84 aa).

It belongs to the bacterial ribosomal protein bL31 family. Type B subfamily. Part of the 50S ribosomal subunit.

The sequence is that of Large ribosomal subunit protein bL31B from Parabacteroides distasonis (strain ATCC 8503 / DSM 20701 / CIP 104284 / JCM 5825 / NCTC 11152).